The chain runs to 219 residues: Ribose-5-phosphate isomerase A (219 aa).

Residues 28 to 31 (TGST), 81 to 84 (DGAD), and 94 to 97 (KGGG) each bind substrate. The Proton acceptor role is filled by glutamate 103. Lysine 121 provides a ligand contact to substrate.

This sequence belongs to the ribose 5-phosphate isomerase family. In terms of assembly, homodimer.

The catalysed reaction is aldehydo-D-ribose 5-phosphate = D-ribulose 5-phosphate. The protein operates within carbohydrate degradation; pentose phosphate pathway; D-ribose 5-phosphate from D-ribulose 5-phosphate (non-oxidative stage): step 1/1. Catalyzes the reversible conversion of ribose-5-phosphate to ribulose 5-phosphate. The chain is Ribose-5-phosphate isomerase A from Shewanella frigidimarina (strain NCIMB 400).